The following is a 640-amino-acid chain: 2-hydroxyacyl-CoA lyase 2 (640 aa).

Residues 2–22 (VLFLIIAAIIIGLLLWKWLDV) form a helical membrane-spanning segment. Position 102 (glutamate 102) interacts with thiamine diphosphate. Residues 477–557 (DFVGSAAYIV…VIGIVGNDAC (81 aa)) are thiamine pyrophosphate binding. Aspartate 528 and asparagine 554 together coordinate Mg(2+).

Belongs to the TPP enzyme family. It depends on Mg(2+) as a cofactor. Requires thiamine diphosphate as cofactor.

The protein resides in the endoplasmic reticulum membrane. The enzyme catalyses 2-hydroxyoctadecanoyl-CoA = heptadecanal + formyl-CoA. It catalyses the reaction (2R)-hydroxyhexadecanoyl-CoA = pentadecanal + formyl-CoA. Endoplasmic reticulum 2-OH acyl-CoA lyase involved in the cleavage (C1 removal) reaction in the fatty acid alpha-oxydation in a thiamine pyrophosphate (TPP)-dependent manner. The chain is 2-hydroxyacyl-CoA lyase 2 from Caenorhabditis elegans.